Reading from the N-terminus, the 180-residue chain is Adenine phosphoribosyltransferase (180 aa).

Belongs to the purine/pyrimidine phosphoribosyltransferase family. Homodimer.

It localises to the cytoplasm. The enzyme catalyses AMP + diphosphate = 5-phospho-alpha-D-ribose 1-diphosphate + adenine. Its pathway is purine metabolism; AMP biosynthesis via salvage pathway; AMP from adenine: step 1/1. In terms of biological role, catalyzes a salvage reaction resulting in the formation of AMP, that is energically less costly than de novo synthesis. The protein is Adenine phosphoribosyltransferase of Mannheimia succiniciproducens (strain KCTC 0769BP / MBEL55E).